The chain runs to 244 residues: Gamma-gliadin (244 aa).

Positions 18-64 (QQPFLQQPQQPSPQPQQVVQIISPATPTTIPSAGKPTSAPFPQQQQQ) are disordered. Residues 35 to 48 (VVQIISPATPTTIP) are compositionally biased toward polar residues.

The protein belongs to the gliadin/glutenin family.

In terms of biological role, gliadin is the major seed storage protein in wheat. The protein is Gamma-gliadin of Triticum aestivum (Wheat).